The sequence spans 491 residues: MRPAPLDIGNIHFVGIGGIGMSGIAEVMHNLGYTVQGSDLADSANVKRLKGLGIKVFIGQKAENLAEAQVIVVSSAIRADNPELMEARARFLPVVRRAEMLAELMRLKSCVAIGGTHGKTTTTSLVAAILDKAGLDPTVINGGIINAYGTNARLGGGEWMVVEADESDGTFVKLPATIAIVTNIDPEHLDYYGSFDAAKDAFLAFVENVPFYGAAVMCIDHPEVQALIGRVRDRRIVTYGTNPQADIRATNARVEDGFNVFDVAITDRKTGTAREMTGVRLAMHGTHNMLNSLAAIGVATQMGIADDKIRAALEGFGGVKRRFTFVGSWNDVNIYDDYGHHPVEIAAVLQAARSATKGRTIAVVQPHRYTRLHNLFDEFCACFNDADAVIVADVYEAGEKPIEGASRDALVEGLRDRGHRNVMALDGPEALPRLIAETARPGDLVVCLGAGSITYWANALPDDLAKLGGKKKAAAKSAAKTKAKPKKGRGK.

Residue G115–T121 participates in ATP binding.

It belongs to the MurCDEF family.

It localises to the cytoplasm. The catalysed reaction is UDP-N-acetyl-alpha-D-muramate + L-alanine + ATP = UDP-N-acetyl-alpha-D-muramoyl-L-alanine + ADP + phosphate + H(+). It functions in the pathway cell wall biogenesis; peptidoglycan biosynthesis. In terms of biological role, cell wall formation. The chain is UDP-N-acetylmuramate--L-alanine ligase from Parvibaculum lavamentivorans (strain DS-1 / DSM 13023 / NCIMB 13966).